A 341-amino-acid chain; its full sequence is MSDQIIARVSQSLAKEQSLESLVRQLLEMLEMVTDMESTYLTKVDVEARLQHIMFARNSQKMYIPENFTVSWDYSLCKRAIDENCFFSDEVPDRWGDCIAARNLGITTFLSTPIHLPDGSFYGTLCAASSEKRQWSERAEQVLQLFAGLIAQYIQKEALVEQLREANAALIAQSYTDSLTGLPNRRAIFENLTTLFSLARHLNHKIMIAFIDLDNFKLINDRFGHNSGDLFLIQVGERLNTLQQNGEVIGRLGGDEFLVVSLNNENADISSLRERIQQQIRGEYHLGDVDLYYPGASLGIVEVDPETTDADSALHAADIAMYQEKKHKQKTPFVAHPALHS.

Residues 18–154 enclose the GAF domain; sequence SLESLVRQLL…LFAGLIAQYI (137 aa). The region spanning 204 to 337 is the GGDEF domain; the sequence is HKIMIAFIDL…KQKTPFVAHP (134 aa). Position 212 (D212) interacts with Mg(2+). Positions 220, 225, and 229 each coordinate substrate. D255 is a binding site for Mg(2+). Residue D255 is the Proton acceptor of the active site.

As to quaternary structure, homodimer. Requires Mg(2+) as cofactor.

The enzyme catalyses 2 GTP = 3',3'-c-di-GMP + 2 diphosphate. The protein operates within purine metabolism; 3',5'-cyclic di-GMP biosynthesis. In terms of biological role, catalyzes the synthesis of cyclic-di-GMP (c-di-GMP) via the condensation of 2 GTP molecules. Cyclic-di-GMP is a second messenger which controls cell surface-associated traits in bacteria. The sequence is that of Diguanylate cyclase DgcP from Escherichia coli (strain K12).